Here is a 64-residue protein sequence, read N- to C-terminus: Large ribosomal subunit protein bL33c (64 aa).

It belongs to the bacterial ribosomal protein bL33 family.

The protein localises to the plastid. It localises to the chloroplast. The polypeptide is Large ribosomal subunit protein bL33c (rpl33) (Mesostigma viride (Green alga)).